The chain runs to 452 residues: COBRA-like protein 1 (452 aa).

Positions 1–33 (MGFFLCSSSSIFFKFGISIIFLVSFSGLTPSEA) are cleaved as a signal peptide. Asn42, Asn167, Asn175, Asn214, Asn239, Asn254, Asn323, Asn338, and Asn357 each carry an N-linked (GlcNAc...) asparagine glycan. Ser432 carries the GPI-anchor amidated serine lipid modification. Positions 433-452 (VGSLFAAMALLLIVFLHGNL) are cleaved as a propeptide — removed in mature form.

The protein belongs to the COBRA family. As to expression, expressed in roots, stems, leaves, flowers and siliques.

The protein localises to the cell membrane. The protein is COBRA-like protein 1 (COBL1) of Arabidopsis thaliana (Mouse-ear cress).